We begin with the raw amino-acid sequence, 395 residues long: S-adenosylmethionine synthase (395 aa).

Histidine 18 lines the ATP pocket. Mg(2+) is bound at residue aspartate 20. K(+) is bound at residue glutamate 46. L-methionine-binding residues include glutamate 59 and glutamine 103. The segment at 103-113 is flexible loop; it reads QSADIAVGVDS. ATP is bound by residues 170 to 172, 235 to 236, aspartate 244, 250 to 251, alanine 267, and lysine 271; these read DAK, KF, and RK. Residue aspartate 244 participates in L-methionine binding. Lysine 275 lines the L-methionine pocket.

The protein belongs to the AdoMet synthase family. Homotetramer; dimer of dimers. Mg(2+) is required as a cofactor. The cofactor is K(+).

The protein localises to the cytoplasm. The enzyme catalyses L-methionine + ATP + H2O = S-adenosyl-L-methionine + phosphate + diphosphate. Its pathway is amino-acid biosynthesis; S-adenosyl-L-methionine biosynthesis; S-adenosyl-L-methionine from L-methionine: step 1/1. Functionally, catalyzes the formation of S-adenosylmethionine (AdoMet) from methionine and ATP. The overall synthetic reaction is composed of two sequential steps, AdoMet formation and the subsequent tripolyphosphate hydrolysis which occurs prior to release of AdoMet from the enzyme. The chain is S-adenosylmethionine synthase from Granulibacter bethesdensis (strain ATCC BAA-1260 / CGDNIH1).